The sequence spans 311 residues: Transcription initiation factor IIB (311 aa).

The TFIIB-type zinc finger occupies 11–42 (KETKCPECGSTKLINDHERGEVVCGACGLVID). Cys15, Cys18, Cys34, and Cys37 together coordinate Zn(2+). 2 tandem repeats follow at residues 128–211 (SELD…TREL) and 222–303 (DYVP…ELTE).

The protein belongs to the TFIIB family.

In terms of biological role, stabilizes TBP binding to an archaeal box-A promoter. Also responsible for recruiting RNA polymerase II to the pre-initiation complex (DNA-TBP-TFIIB). This chain is Transcription initiation factor IIB, found in Methanosphaera stadtmanae (strain ATCC 43021 / DSM 3091 / JCM 11832 / MCB-3).